Consider the following 555-residue polypeptide: MRGAILATAAAFAGTAVADMHMRRHAHEGLHHRALHASSAVPEEECGCTTEVITYWGEPTTIPLSVPTSTVTSETTETVHSTSYSTVTVTATSSAAPVETPSETPSPTPEVTLPTAGVTSYSETGTYTIPATTITVTDTTTVCGATTTELPSGTHTYGGVTTIVETATTITCPYATVKPTGSTVTSVIETTTYVCPSAGTYTIAPTTTFVPTSTVVVYPTPETVTPGTYTNPGTTITVTRTEDVYVCPYTNGNVPTSVPALPTTSAASTTTAVPSSSTTTSSATSVPTGASGNKMGMTFTPYNNDGSCMAKNDVLEQVGLIKGKGFSHVRVYGTDCHTLEYVGAACSTHGLKMILGVNVEGSTGFDGARSQFKDITNWGQWDLVSLIVVGNEVVTSNIASAAQLASFVSEGASAFSAAGYTGQVTTAEPIDVWLSNGATLCPVVDILGANLHPFFNPEFTAAEAGTLVSNQIKDLKQVCTGKDVINLETGWPNAGSANGKAIPGQSQQTTAIKSLVEKVGDVSVFFSYADDGWKSKFATSDKYNVEQHWGCIDQF.

The N-terminal stretch at 1 to 18 (MRGAILATAAAFAGTAVA) is a signal peptide. Disordered regions lie at residues 92 to 114 (TSSA…VTLP) and 263 to 290 (TTSA…PTGA). A compositionally biased stretch (low complexity) spans 263–288 (TTSAASTTTAVPSSSTTTSSATSVPT). Residue Glu392 is the Proton donor of the active site. Glu488 functions as the Nucleophile in the catalytic mechanism.

It belongs to the glycosyl hydrolase 17 family.

Its subcellular location is the secreted. It localises to the cell wall. The catalysed reaction is Hydrolysis of terminal, non-reducing beta-D-glucosyl residues with release of beta-D-glucose.. It functions in the pathway glycan metabolism; cellulose degradation. Beta-glucosidases are one of a number of cellulolytic enzymes involved in the degradation of cellulosic biomass. Catalyzes the last step releasing glucose from the inhibitory cellobiose. This Emericella nidulans (strain FGSC A4 / ATCC 38163 / CBS 112.46 / NRRL 194 / M139) (Aspergillus nidulans) protein is Probable beta-glucosidase btgE (btgE).